The sequence spans 215 residues: Adenylate kinase (215 aa).

10-15 (GAGKGT) is an ATP binding site. An NMP region spans residues 30–59 (STGDMLRAAVKAGTELGLKAKSVMDSGGLV). Residues Thr31, Arg36, 57–59 (GLV), 85–88 (GFPR), and Gln92 contribute to the AMP site. The LID stretch occupies residues 122–159 (GRRVHEASGRVYHTVYNPPKIAGKDDITGEDLVQRKDD). Residues Arg123 and 132 to 133 (VY) each bind ATP. AMP-binding residues include Arg156 and Arg167. Gly201 lines the ATP pocket.

Belongs to the adenylate kinase family. In terms of assembly, monomer.

Its subcellular location is the cytoplasm. It catalyses the reaction AMP + ATP = 2 ADP. Its pathway is purine metabolism; AMP biosynthesis via salvage pathway; AMP from ADP: step 1/1. Its function is as follows. Catalyzes the reversible transfer of the terminal phosphate group between ATP and AMP. Plays an important role in cellular energy homeostasis and in adenine nucleotide metabolism. This is Adenylate kinase from Pseudomonas fluorescens (strain ATCC BAA-477 / NRRL B-23932 / Pf-5).